The chain runs to 424 residues: Elongation factor 1-alpha (424 aa).

Residues Lys-5–Ile-223 enclose the tr-type G domain. The tract at residues Gly-14–Ser-21 is G1. Residue Gly-14–Ser-21 participates in GTP binding. Position 21 (Ser-21) interacts with Mg(2+). Positions Gly-70–Asp-74 are G2. Positions Asp-91 to Gly-94 are G3. Residues Asp-91–His-95 and Asn-148–Asp-151 each bind GTP. Positions Asn-148–Asp-151 are G4. Residues Ser-187–Tyr-189 are G5.

The protein belongs to the TRAFAC class translation factor GTPase superfamily. Classic translation factor GTPase family. EF-Tu/EF-1A subfamily.

The protein localises to the cytoplasm. The enzyme catalyses GTP + H2O = GDP + phosphate + H(+). GTP hydrolase that promotes the GTP-dependent binding of aminoacyl-tRNA to the A-site of ribosomes during protein biosynthesis. This Thermoplasma volcanium (strain ATCC 51530 / DSM 4299 / JCM 9571 / NBRC 15438 / GSS1) protein is Elongation factor 1-alpha.